Here is a 220-residue protein sequence, read N- to C-terminus: Urease accessory protein UreF (220 aa).

The protein belongs to the UreF family. UreD, UreF and UreG form a complex that acts as a GTP-hydrolysis-dependent molecular chaperone, activating the urease apoprotein by helping to assemble the nickel containing metallocenter of UreC. The UreE protein probably delivers the nickel.

It is found in the cytoplasm. Its function is as follows. Required for maturation of urease via the functional incorporation of the urease nickel metallocenter. In Jannaschia sp. (strain CCS1), this protein is Urease accessory protein UreF.